We begin with the raw amino-acid sequence, 274 residues long: Formamidopyrimidine-DNA glycosylase (274 aa).

Catalysis depends on Pro2, which acts as the Schiff-base intermediate with DNA. Residue Glu3 is the Proton donor of the active site. Lys59 functions as the Proton donor; for beta-elimination activity in the catalytic mechanism. DNA-binding residues include His93, Arg112, and Arg155. Residues 240 to 274 (QVYGRTGRPCPRCGQPLERVRLGGRSTHFCPRCQV) form an FPG-type zinc finger. Arg264 acts as the Proton donor; for delta-elimination activity in catalysis.

The protein belongs to the FPG family. As to quaternary structure, monomer. It depends on Zn(2+) as a cofactor.

It carries out the reaction Hydrolysis of DNA containing ring-opened 7-methylguanine residues, releasing 2,6-diamino-4-hydroxy-5-(N-methyl)formamidopyrimidine.. The catalysed reaction is 2'-deoxyribonucleotide-(2'-deoxyribose 5'-phosphate)-2'-deoxyribonucleotide-DNA = a 3'-end 2'-deoxyribonucleotide-(2,3-dehydro-2,3-deoxyribose 5'-phosphate)-DNA + a 5'-end 5'-phospho-2'-deoxyribonucleoside-DNA + H(+). Its function is as follows. Involved in base excision repair of DNA damaged by oxidation or by mutagenic agents. Acts as a DNA glycosylase that recognizes and removes damaged bases. Has a preference for oxidized purines, such as 7,8-dihydro-8-oxoguanine (8-oxoG). Has AP (apurinic/apyrimidinic) lyase activity and introduces nicks in the DNA strand. Cleaves the DNA backbone by beta-delta elimination to generate a single-strand break at the site of the removed base with both 3'- and 5'-phosphates. In Moorella thermoacetica (strain ATCC 39073 / JCM 9320), this protein is Formamidopyrimidine-DNA glycosylase.